Reading from the N-terminus, the 101-residue chain is Urease subunit beta (101 aa).

Belongs to the urease beta subunit family. As to quaternary structure, heterotrimer of UreA (gamma), UreB (beta) and UreC (alpha) subunits. Three heterotrimers associate to form the active enzyme.

It is found in the cytoplasm. It carries out the reaction urea + 2 H2O + H(+) = hydrogencarbonate + 2 NH4(+). The protein operates within nitrogen metabolism; urea degradation; CO(2) and NH(3) from urea (urease route): step 1/1. This Burkholderia vietnamiensis (strain G4 / LMG 22486) (Burkholderia cepacia (strain R1808)) protein is Urease subunit beta.